A 419-amino-acid chain; its full sequence is Serine hydroxymethyltransferase (419 aa).

Residues L122 and 126–128 (GHL) contribute to the (6S)-5,6,7,8-tetrahydrofolate site. K231 carries the N6-(pyridoxal phosphate)lysine modification. 354-356 (SPF) provides a ligand contact to (6S)-5,6,7,8-tetrahydrofolate.

Belongs to the SHMT family. As to quaternary structure, homodimer. It depends on pyridoxal 5'-phosphate as a cofactor.

Its subcellular location is the cytoplasm. It carries out the reaction (6R)-5,10-methylene-5,6,7,8-tetrahydrofolate + glycine + H2O = (6S)-5,6,7,8-tetrahydrofolate + L-serine. Its pathway is one-carbon metabolism; tetrahydrofolate interconversion. The protein operates within amino-acid biosynthesis; glycine biosynthesis; glycine from L-serine: step 1/1. Catalyzes the reversible interconversion of serine and glycine with tetrahydrofolate (THF) serving as the one-carbon carrier. This reaction serves as the major source of one-carbon groups required for the biosynthesis of purines, thymidylate, methionine, and other important biomolecules. Also exhibits THF-independent aldolase activity toward beta-hydroxyamino acids, producing glycine and aldehydes, via a retro-aldol mechanism. The sequence is that of Serine hydroxymethyltransferase from Exiguobacterium sibiricum (strain DSM 17290 / CCUG 55495 / CIP 109462 / JCM 13490 / 255-15).